Consider the following 252-residue polypeptide: uncharacterized protein (252 aa).

28–35 (GCDGTGKS) is a binding site for ATP.

This sequence to E.coli YghS and YghT.

This is an uncharacterized protein from Escherichia coli O6:H1 (strain CFT073 / ATCC 700928 / UPEC).